The sequence spans 101 residues: Small ribosomal subunit protein uS14m (101 aa).

It belongs to the universal ribosomal protein uS14 family. As to quaternary structure, component of the mitochondrial ribosome small subunit (28S) which comprises a 12S rRNA and about 30 distinct proteins. Interacts with LIAT1.

It is found in the mitochondrion. This Dictyostelium discoideum (Social amoeba) protein is Small ribosomal subunit protein uS14m (mrps14).